A 333-amino-acid chain; its full sequence is uncharacterized protein (333 aa).

It belongs to the polysaccharide synthase family.

This is an uncharacterized protein from Methanocaldococcus jannaschii (strain ATCC 43067 / DSM 2661 / JAL-1 / JCM 10045 / NBRC 100440) (Methanococcus jannaschii).